The following is a 233-amino-acid chain: Germin-like protein 3-7 (233 aa).

The signal sequence occupies residues 1-35 (MSSSSSMECTGNMSAAPLLVLTVAVLAVLASTCAA). Cys-44 and Cys-63 are disulfide-bonded. One can recognise a Cupin type-1 domain in the interval 77-225 (AGLAAAGSTD…SFQVDAEIIK (149 aa)). Residues His-125, His-127, Glu-132, and His-171 each contribute to the Mn(2+) site. Asn-178 carries N-linked (GlcNAc...) asparagine glycosylation.

This sequence belongs to the germin family. As to quaternary structure, oligomer (believed to be a pentamer but probably hexamer).

It localises to the secreted. Its subcellular location is the extracellular space. The protein resides in the apoplast. In terms of biological role, may play a role in plant defense. Probably has no oxalate oxidase activity even if the active site is conserved. This chain is Germin-like protein 3-7 (GER7), found in Oryza sativa subsp. japonica (Rice).